The primary structure comprises 217 residues: 25 kDa ookinete surface antigen (217 aa).

The first 16 residues, 1 to 16, serve as a signal peptide directing secretion; it reads MNKLYSLFLFLFIQLS. The 30-residue stretch at 30–59 folds into the EGF-like 1; truncated domain; it reads CKRGFLIQMSGHLECKCENDLVLVNEETCE. EGF-like domains are found at residues 61-106, 106-150, and 153-193; these read KVLK…NVCI, IPNE…NKCS, and GETK…SICT. Intrachain disulfides connect Cys65-Cys80, Cys74-Cys92, Cys94-Cys105, Cys110-Cys120, Cys115-Cys133, Cys135-Cys149, Cys157-Cys168, Cys161-Cys177, and Cys179-Cys192. An N-linked (GlcNAc...) asparagine glycan is attached at Asn112. N-linked (GlcNAc...) asparagine glycans are attached at residues Asn165 and Asn187. Residue Ser196 is the site of GPI-anchor amidated serine attachment. A propeptide spans 197-217 (removed in mature form); sequence AYNILNLSIMFILFSVCFFIM. N-linked (GlcNAc...) asparagine glycosylation is present at Asn202.

It is found in the cell membrane. The chain is 25 kDa ookinete surface antigen from Plasmodium falciparum (isolate NF54).